Here is a 54-residue protein sequence, read N- to C-terminus: Large ribosomal subunit protein bL33A (54 aa).

The protein belongs to the bacterial ribosomal protein bL33 family.

This Mesoplasma florum (strain ATCC 33453 / NBRC 100688 / NCTC 11704 / L1) (Acholeplasma florum) protein is Large ribosomal subunit protein bL33A.